The chain runs to 96 residues: Co-chaperonin GroES (96 aa).

It belongs to the GroES chaperonin family. As to quaternary structure, heptamer of 7 subunits arranged in a ring. Interacts with the chaperonin GroEL.

The protein resides in the cytoplasm. Together with the chaperonin GroEL, plays an essential role in assisting protein folding. The GroEL-GroES system forms a nano-cage that allows encapsulation of the non-native substrate proteins and provides a physical environment optimized to promote and accelerate protein folding. GroES binds to the apical surface of the GroEL ring, thereby capping the opening of the GroEL channel. The sequence is that of Co-chaperonin GroES from Syntrophomonas wolfei subsp. wolfei (strain DSM 2245B / Goettingen).